Reading from the N-terminus, the 305-residue chain is DNA-directed RNA polymerase 35 kDa subunit (305 aa).

The protein belongs to the poxviridae DNA-directed RNA polymerase 35 kDa subunit family. In terms of assembly, the DNA-dependent RNA polymerase used for intermediate and late genes expression consists of eight subunits 147 kDa, 133 kDa, 35 kDa, 30 kDa, 22 kDa, 19 kDa, 18 kDa and 7 kDa totalling more than 500 kDa in mass. The same holoenzyme, with the addition of the transcription-specificity factor RAP94, is used for early gene expression.

Its subcellular location is the virion. The enzyme catalyses RNA(n) + a ribonucleoside 5'-triphosphate = RNA(n+1) + diphosphate. Its function is as follows. Part of the DNA-dependent RNA polymerase which catalyzes the transcription of viral DNA into RNA using the four ribonucleoside triphosphates as substrates. Responsible for the transcription of early, intermediate and late genes. DNA-dependent RNA polymerase associates with the early transcription factor (ETF), itself composed of D6 and A7, thereby allowing the early genes transcription. Late transcription, and probably also intermediate transcription, require newly synthesized RNA polymerase. In Homo sapiens (Human), this protein is DNA-directed RNA polymerase 35 kDa subunit (OPG156).